The primary structure comprises 398 residues: Phytoene synthase, chloroplastic (398 aa).

The protein belongs to the phytoene/squalene synthase family. Monomer.

It localises to the plastid. It is found in the chloroplast. The catalysed reaction is 2 (2E,6E,10E)-geranylgeranyl diphosphate = 15-cis-phytoene + 2 diphosphate. It participates in carotenoid biosynthesis; phytoene biosynthesis; all-trans-phytoene from geranylgeranyl diphosphate: step 1/1. Functionally, catalyzes the reaction from prephytoene diphosphate to phytoene. The chain is Phytoene synthase, chloroplastic (PSY) from Daucus carota (Wild carrot).